The sequence spans 736 residues: MNTEALIEAAVEVDVQEAAPVVEPDIEVIPAIEAPAASLPAIVAPNLDDSSLYIHRELSQLQFNIRVLEQALDESYPLLERLKFLLIFSSNLDEFFEIRVAGLKKQITFAREQAGADGLQPHQALARISELVHGHVDRQYAILNDILLPELEKHQVRFIRRRHWTAKLKAWVRRYFRDEIAPIITPIGLDPTHPFPLLVNKSLNFIVELEGIDAFGRDSGLAIIPAPRLLPRVIKVPEEVCGPGDNFVFLSSMIHAHADDLFQGMKVKGCYQFRLTRNADLALDSEDVEDLARALRGELFSRRYGDAVRLEVADTCPKHLSDYLLKQFNLHESELYQVNGPVNLTRLFSITGLDSHPELQYPPFTPAIPKLLQNSENVFSVVSKQDILLLHPFESFTPVVDLLRQAAKDPHVLAVRQTLYRSGANSEIVDALVDAARNGKEVTAVIELRARFDEESNLQLASRLQAAGAVVIYGVVGFKTHAKMMLILRREAGEIVRYAHLGTGNYHAGNARLYTDYSLLTSDDALCEDVGKLFSQLIGMGKTLRMKKLLHAPFTLKKGMLDMIARETQFALDGKPAHIIAKFNSLTDPKIIRALYKASQSGVRIDLVVRGMCCLRPGIAGVSHNIHVRSIIGRFLEHTRVFYFLNGGDEQMFLSSADWMERNLDKRVETCFPVEGKKLILRVKKELESYLTDNTHSWLLQSDGRYVRSMPTGNQNARSAQATLLERLSNPVLSVR.

Asn91 is an ATP binding site. The Mg(2+) site is built by Arg421 and Arg451. His481 functions as the Phosphohistidine intermediate in the catalytic mechanism. Tyr514, Arg610, and His638 together coordinate ATP.

It belongs to the polyphosphate kinase 1 (PPK1) family. Requires Mg(2+) as cofactor. An intermediate of this reaction is the autophosphorylated ppk in which a phosphate is covalently linked to a histidine residue through a N-P bond.

It carries out the reaction [phosphate](n) + ATP = [phosphate](n+1) + ADP. Its function is as follows. Catalyzes the reversible transfer of the terminal phosphate of ATP to form a long-chain polyphosphate (polyP). This is Polyphosphate kinase from Pseudomonas syringae pv. tomato (strain ATCC BAA-871 / DC3000).